Here is a 41-residue protein sequence, read N- to C-terminus: Photosystem II reaction center protein Y (41 aa).

The chain crosses the membrane as a helical span at residues 7–25 (VAIVLAPIAVAAGWAAFNI).

The protein belongs to the PsbY family. As to quaternary structure, PSII is composed of 1 copy each of membrane proteins PsbA, PsbB, PsbC, PsbD, PsbE, PsbF, PsbH, PsbI, PsbJ, PsbK, PsbL, PsbM, PsbT, PsbX, PsbY, PsbZ, Psb30/Ycf12, peripheral proteins PsbO, CyanoQ (PsbQ), PsbU, PsbV and a large number of cofactors. It forms dimeric complexes.

It localises to the cellular thylakoid membrane. Its function is as follows. Loosely associated component of the core of photosystem II (PSII), it is not always seen in crystals. PSII is a light-driven water plastoquinone oxidoreductase, using light energy to abstract electrons from H(2)O, generating a proton gradient subsequently used for ATP formation. The chain is Photosystem II reaction center protein Y from Nostoc sp. (strain PCC 7120 / SAG 25.82 / UTEX 2576).